The primary structure comprises 61 residues: Small ribosomal subunit protein uS14 (61 aa).

Cys-24, Cys-27, Cys-40, and Cys-43 together coordinate Zn(2+).

The protein belongs to the universal ribosomal protein uS14 family. Zinc-binding uS14 subfamily. As to quaternary structure, part of the 30S ribosomal subunit. Contacts proteins S3 and S10. Requires Zn(2+) as cofactor.

Its function is as follows. Binds 16S rRNA, required for the assembly of 30S particles and may also be responsible for determining the conformation of the 16S rRNA at the A site. The protein is Small ribosomal subunit protein uS14 of Endomicrobium trichonymphae.